The sequence spans 374 residues: Protein STRICTOSIDINE SYNTHASE-LIKE 10 (374 aa).

Positions 1–18 (MTMMIITVFLTVIAAVLA) are cleaved as a signal peptide. N-linked (GlcNAc...) asparagine glycosylation is present at asparagine 50.

This sequence belongs to the strictosidine synthase family.

The protein localises to the vacuole. In Arabidopsis thaliana (Mouse-ear cress), this protein is Protein STRICTOSIDINE SYNTHASE-LIKE 10.